The sequence spans 137 residues: uncharacterized protein (137 aa).

This is an uncharacterized protein from Schizosaccharomyces pombe (strain 972 / ATCC 24843) (Fission yeast).